Here is a 354-residue protein sequence, read N- to C-terminus: UDP-glucose 4-epimerase 1 (354 aa).

8 to 39 (TILVTGGAGYIGSHTVLQLLQLGFRVVVLDNL) contacts NAD(+). Residue serine 133 participates in substrate binding. Tyrosine 157 serves as the catalytic Proton acceptor.

Belongs to the NAD(P)-dependent epimerase/dehydratase family. NAD(+) serves as cofactor.

It catalyses the reaction UDP-alpha-D-glucose = UDP-alpha-D-galactose. It functions in the pathway carbohydrate metabolism; galactose metabolism. Catalyzes the interconversion between UDP-glucose and UDP-galactose. In Oryza sativa subsp. japonica (Rice), this protein is UDP-glucose 4-epimerase 1 (UGE-1).